The chain runs to 476 residues: Protein transport protein Sec61 subunit alpha (476 aa).

Over 2 to 33 (GIKFLEFIKPFCAVLPEIQKPERKIQFREKVL) the chain is Cytoplasmic. A helical transmembrane segment spans residues 34–53 (WTAITLFIFLVCCQIPLFGI). Topologically, residues 54–76 (MSSDSADPFYWMRVILASNRGTL) are lumenal. A helical transmembrane segment spans residues 77–96 (MELGIAPIVTSGLIMQLLAG). Over 97 to 117 (AKIIEVGDTPKDRALFNGAQK) the chain is Cytoplasmic. The chain crosses the membrane as a helical span at residues 118–138 (LFGMIITIGQAIVYVMTGMYG). Over 139 to 144 (DPSEMG) the chain is Lumenal. A helical transmembrane segment spans residues 145 to 165 (AGICLLIIIQLFVAGLIVLLL). Over 166-172 (DELLQKG) the chain is Cytoplasmic. Residues 173 to 193 (YGLGSGISLFIATNICETIVW) traverse the membrane as a helical segment. The Lumenal segment spans residues 194-240 (KAFGPTTVNTGRGTEFEGAIIALFHLLATRTDKVRALREAFYRQNLP). The chain crosses the membrane as a helical span at residues 241–261 (NLMNLIATVFVFAVVIYFQGF). Residues 262–288 (RVDLPIKSARYRGQYNTYPIKLFYTSN) are Cytoplasmic-facing. A helical membrane pass occupies residues 289–309 (IPIILQSALVSNLYVISQMLS). Residues 310 to 354 (TRFSGNFLVNLLGTWSDATTSGPARAYPVAGLCYYLSPPESFGSV) are Lumenal-facing. Residues 355–375 (LDDPVHAVIYIVFMLGSCAFF) form a helical membrane-spanning segment. Residues 376-420 (SKTWIEVSGSSAKDVAKQLKEQQMVMRGHRETSMVHELNRYIPTA) are Cytoplasmic-facing. A helical membrane pass occupies residues 421–441 (AAFGGLCIGGLSVMADFLGAI). The Lumenal portion of the chain corresponds to 442–445 (GSGT). The helical transmembrane segment at 446–462 (GILLAVTIIYQYFEIFV) threads the bilayer. Residues 463–476 (KEQSEVGSMGALLF) lie on the Cytoplasmic side of the membrane.

Belongs to the SecY/SEC61-alpha family. The SEC61 channel-forming translocon complex consists of channel-forming core components SEC61A1, SEC61B and SEC61G and different auxiliary components such as SEC62 and SEC63. The SEC61 channel associates with the multi-pass translocon (MPT) complex.

The protein resides in the endoplasmic reticulum membrane. Functionally, component of SEC61 channel-forming translocon complex that mediates transport of signal peptide-containing precursor polypeptides across the endoplasmic reticulum (ER). Forms a ribosome receptor and a gated pore in the ER membrane, both functions required for cotranslational translocation of nascent polypeptides. May cooperate with auxiliary protein SEC62, SEC63 and HSPA5/BiP to enable post-translational transport of small presecretory proteins. The SEC61 channel is also involved in ER membrane insertion of transmembrane proteins: it mediates membrane insertion of the first few transmembrane segments of proteins, while insertion of subsequent transmembrane regions of multi-pass membrane proteins is mediated by the multi-pass translocon (MPT) complex. In Bovichtus variegatus (Thornfish), this protein is Protein transport protein Sec61 subunit alpha (sec61a).